The sequence spans 180 residues: FMN reductase (NADH) RutF (180 aa).

This sequence belongs to the non-flavoprotein flavin reductase family. RutF subfamily.

The catalysed reaction is FMNH2 + NAD(+) = FMN + NADH + 2 H(+). Functionally, catalyzes the reduction of FMN to FMNH2 which is used to reduce pyrimidine by RutA via the Rut pathway. The polypeptide is FMN reductase (NADH) RutF (Variovorax paradoxus (strain S110)).